The chain runs to 179 residues: uncharacterized protein (179 aa).

The protein localises to the virion. This is an uncharacterized protein from Acanthamoeba polyphaga (Amoeba).